The sequence spans 220 residues: MNVQIEESWKQHLAPEFEKDYFIRLTEFVRSEYQTATIYPPGRFIFNAFNLCPFDKVKVVIIGQDPYHGPGQAHGLCFSVNDGVPFPPSLQNIFKEIQSDLGAPIPTSGNLTRWANQGVLLLNATLTVRAHQAGSHQRRGWEEFTDAAIRVLAEQRENIVFILWGSYAQKKGAFIDRNKHLVLASAHPSPLSAYNGFFGNKHFSRTNEYLQAHGQTPIEW.

Aspartate 65 functions as the Proton acceptor in the catalytic mechanism.

Belongs to the uracil-DNA glycosylase (UDG) superfamily. UNG family.

The protein resides in the cytoplasm. The enzyme catalyses Hydrolyzes single-stranded DNA or mismatched double-stranded DNA and polynucleotides, releasing free uracil.. Excises uracil residues from the DNA which can arise as a result of misincorporation of dUMP residues by DNA polymerase or due to deamination of cytosine. In Phocaeicola vulgatus (strain ATCC 8482 / DSM 1447 / JCM 5826 / CCUG 4940 / NBRC 14291 / NCTC 11154) (Bacteroides vulgatus), this protein is Uracil-DNA glycosylase.